We begin with the raw amino-acid sequence, 212 residues long: MNAKFIVIEGLEGAGKSTAIQVVVETLQQNGIDHITRTREPGGTLLAEKLRALVKEEHPGEELQDITELLLVYAARVQLVENVIKPALARGEWVVGDRHDMSSQAYQGGGRQIAPSTMQSLKQTALGDFKPDLTLYLDIDPKLGLERARGRGELDRIEKMDISFFERARERYLELANSDDSVVMIDAAQSIEQVTADIRRALQDWLSQVNRV.

Gly-10–Ser-17 serves as a coordination point for ATP.

The protein belongs to the thymidylate kinase family.

The catalysed reaction is dTMP + ATP = dTDP + ADP. Phosphorylation of dTMP to form dTDP in both de novo and salvage pathways of dTTP synthesis. The polypeptide is Thymidylate kinase (Vibrio cholerae serotype O1 (strain ATCC 39541 / Classical Ogawa 395 / O395)).